Reading from the N-terminus, the 307-residue chain is Ribosomal RNA small subunit methyltransferase H (307 aa).

Residues 33–35, Asp-51, Phe-82, Asp-96, and Gln-103 each bind S-adenosyl-L-methionine; that span reads GGY.

Belongs to the methyltransferase superfamily. RsmH family.

The protein localises to the cytoplasm. It carries out the reaction cytidine(1402) in 16S rRNA + S-adenosyl-L-methionine = N(4)-methylcytidine(1402) in 16S rRNA + S-adenosyl-L-homocysteine + H(+). In terms of biological role, specifically methylates the N4 position of cytidine in position 1402 (C1402) of 16S rRNA. This chain is Ribosomal RNA small subunit methyltransferase H, found in Rickettsia massiliae (strain Mtu5).